We begin with the raw amino-acid sequence, 115 residues long: NAD(P)H-quinone oxidoreductase subunit M (115 aa).

It belongs to the complex I NdhM subunit family. In terms of assembly, NDH-1 can be composed of about 15 different subunits; different subcomplexes with different compositions have been identified which probably have different functions.

The protein resides in the cellular thylakoid membrane. The catalysed reaction is a plastoquinone + NADH + (n+1) H(+)(in) = a plastoquinol + NAD(+) + n H(+)(out). It catalyses the reaction a plastoquinone + NADPH + (n+1) H(+)(in) = a plastoquinol + NADP(+) + n H(+)(out). NDH-1 shuttles electrons from an unknown electron donor, via FMN and iron-sulfur (Fe-S) centers, to quinones in the respiratory and/or the photosynthetic chain. The immediate electron acceptor for the enzyme in this species is believed to be plastoquinone. Couples the redox reaction to proton translocation, and thus conserves the redox energy in a proton gradient. Cyanobacterial NDH-1 also plays a role in inorganic carbon-concentration. This is NAD(P)H-quinone oxidoreductase subunit M from Synechococcus sp. (strain CC9605).